A 212-amino-acid chain; its full sequence is Thiamine-phosphate synthase (212 aa).

Residues 39 to 41 (QLR) and asparagine 71 contribute to the 4-amino-2-methyl-5-(diphosphooxymethyl)pyrimidine site. Positions 72 and 91 each coordinate Mg(2+). Serine 110 contacts 4-amino-2-methyl-5-(diphosphooxymethyl)pyrimidine. 136–138 (TGT) contributes to the 2-[(2R,5Z)-2-carboxy-4-methylthiazol-5(2H)-ylidene]ethyl phosphate binding site. Position 139 (lysine 139) interacts with 4-amino-2-methyl-5-(diphosphooxymethyl)pyrimidine. Residues glycine 167 and 187–188 (VS) each bind 2-[(2R,5Z)-2-carboxy-4-methylthiazol-5(2H)-ylidene]ethyl phosphate.

This sequence belongs to the thiamine-phosphate synthase family. Requires Mg(2+) as cofactor.

It catalyses the reaction 2-[(2R,5Z)-2-carboxy-4-methylthiazol-5(2H)-ylidene]ethyl phosphate + 4-amino-2-methyl-5-(diphosphooxymethyl)pyrimidine + 2 H(+) = thiamine phosphate + CO2 + diphosphate. The catalysed reaction is 2-(2-carboxy-4-methylthiazol-5-yl)ethyl phosphate + 4-amino-2-methyl-5-(diphosphooxymethyl)pyrimidine + 2 H(+) = thiamine phosphate + CO2 + diphosphate. It carries out the reaction 4-methyl-5-(2-phosphooxyethyl)-thiazole + 4-amino-2-methyl-5-(diphosphooxymethyl)pyrimidine + H(+) = thiamine phosphate + diphosphate. It participates in cofactor biosynthesis; thiamine diphosphate biosynthesis; thiamine phosphate from 4-amino-2-methyl-5-diphosphomethylpyrimidine and 4-methyl-5-(2-phosphoethyl)-thiazole: step 1/1. Condenses 4-methyl-5-(beta-hydroxyethyl)thiazole monophosphate (THZ-P) and 2-methyl-4-amino-5-hydroxymethyl pyrimidine pyrophosphate (HMP-PP) to form thiamine monophosphate (TMP). The polypeptide is Thiamine-phosphate synthase (Azorhizobium caulinodans (strain ATCC 43989 / DSM 5975 / JCM 20966 / LMG 6465 / NBRC 14845 / NCIMB 13405 / ORS 571)).